The following is a 2439-amino-acid chain: Centrosomal protein of 290 kDa (2439 aa).

2 coiled-coil regions span residues 75–913 (AEQA…VVTE) and 1271–1576 (NTML…YMDT). 3 disordered regions span residues 1802–1824 (ETLN…EKEA), 1867–1890 (ELDR…KSSK), and 2017–2048 (ESRL…FQKE). The span at 2039-2048 (SQREHEFQKE) shows a compositional bias: basic and acidic residues. Residues 2046–2394 (QKENLRLSTE…KLTQELKHFD (349 aa)) are a coiled coil.

As to quaternary structure, part of the tectonic-like complex (also named B9 complex).

It is found in the cytoplasm. It localises to the cytoskeleton. The protein localises to the microtubule organizing center. The protein resides in the centrosome. Its subcellular location is the centriolar satellite. It is found in the nucleus. It localises to the cilium basal body. Its function is as follows. Involved in early and late steps in cilia formation. May play a role in early ciliogenesis in the disappearance of centriolar satellites and in the transition of primary ciliar vesicles (PCVs) to capped ciliary vesicles (CCVs). In the ciliary transition zone is part of the tectonic-like complex which is required for tissue-specific ciliogenesis and may regulate ciliary membrane composition. Involved in regulation of the BBSome complex integrity and in ciliary targeting of selected BBSome cargos. Required for the correct localization of ciliary and phototransduction proteins in retinal photoreceptor cells; may play a role in ciliary transport processes. Involved in development of the nervous system and kidney. The sequence is that of Centrosomal protein of 290 kDa (cep290) from Danio rerio (Zebrafish).